Here is a 228-residue protein sequence, read N- to C-terminus: Ribose-5-phosphate isomerase A (228 aa).

Substrate is bound by residues 28-31, 84-87, and 97-100; these read TGST, DGAD, and KGGG. Catalysis depends on glutamate 106, which acts as the Proton acceptor. Substrate is bound at residue lysine 124.

The protein belongs to the ribose 5-phosphate isomerase family. In terms of assembly, homodimer.

The enzyme catalyses aldehydo-D-ribose 5-phosphate = D-ribulose 5-phosphate. Its pathway is carbohydrate degradation; pentose phosphate pathway; D-ribose 5-phosphate from D-ribulose 5-phosphate (non-oxidative stage): step 1/1. Functionally, catalyzes the reversible conversion of ribose-5-phosphate to ribulose 5-phosphate. This Levilactobacillus brevis (strain ATCC 367 / BCRC 12310 / CIP 105137 / JCM 1170 / LMG 11437 / NCIMB 947 / NCTC 947) (Lactobacillus brevis) protein is Ribose-5-phosphate isomerase A.